Here is a 78-residue protein sequence, read N- to C-terminus: Large ribosomal subunit protein bL28 (78 aa).

The tract at residues 1 to 21 is disordered; it reads MSRVCQVTGKRPVSGNNRSHA.

It belongs to the bacterial ribosomal protein bL28 family.

This chain is Large ribosomal subunit protein bL28, found in Yersinia enterocolitica serotype O:8 / biotype 1B (strain NCTC 13174 / 8081).